Here is a 114-residue protein sequence, read N- to C-terminus: Large ribosomal subunit protein uL22 (114 aa).

Belongs to the universal ribosomal protein uL22 family. In terms of assembly, part of the 50S ribosomal subunit.

Its function is as follows. This protein binds specifically to 23S rRNA; its binding is stimulated by other ribosomal proteins, e.g. L4, L17, and L20. It is important during the early stages of 50S assembly. It makes multiple contacts with different domains of the 23S rRNA in the assembled 50S subunit and ribosome. The globular domain of the protein is located near the polypeptide exit tunnel on the outside of the subunit, while an extended beta-hairpin is found that lines the wall of the exit tunnel in the center of the 70S ribosome. This chain is Large ribosomal subunit protein uL22, found in Streptococcus gordonii (strain Challis / ATCC 35105 / BCRC 15272 / CH1 / DL1 / V288).